The following is a 63-amino-acid chain: DNA gyrase inhibitor YacG (63 aa).

The Zn(2+) site is built by Cys-9, Cys-12, Cys-28, and Cys-32.

This sequence belongs to the DNA gyrase inhibitor YacG family. As to quaternary structure, interacts with GyrB. Zn(2+) is required as a cofactor.

Functionally, inhibits all the catalytic activities of DNA gyrase by preventing its interaction with DNA. Acts by binding directly to the C-terminal domain of GyrB, which probably disrupts DNA binding by the gyrase. In Salmonella paratyphi A (strain AKU_12601), this protein is DNA gyrase inhibitor YacG.